The chain runs to 580 residues: 2-isopropylmalate synthase (580 aa).

The segment covering 1–11 has biased composition (polar residues); that stretch reads MSATAFPTLST. The segment at 1–37 is disordered; it reads MSATAFPTLSTPAGEIPATAPAWNRQRRSQMPSHRYR. The Pyruvate carboxyltransferase domain maps to 61–334; the sequence is PLWVPVDLRD…DPMIDFSDID (274 aa). The Mg(2+) site is built by D70, H273, H275, and N309. A regulatory domain region spans residues 476-580; the sequence is EGEADAPQAD…ARAVAEVRPG (105 aa).

This sequence belongs to the alpha-IPM synthase/homocitrate synthase family. LeuA type 2 subfamily. Homodimer. Mg(2+) is required as a cofactor.

It is found in the cytoplasm. It catalyses the reaction 3-methyl-2-oxobutanoate + acetyl-CoA + H2O = (2S)-2-isopropylmalate + CoA + H(+). It participates in amino-acid biosynthesis; L-leucine biosynthesis; L-leucine from 3-methyl-2-oxobutanoate: step 1/4. In terms of biological role, catalyzes the condensation of the acetyl group of acetyl-CoA with 3-methyl-2-oxobutanoate (2-ketoisovalerate) to form 3-carboxy-3-hydroxy-4-methylpentanoate (2-isopropylmalate). The polypeptide is 2-isopropylmalate synthase (Nocardia farcinica (strain IFM 10152)).